Reading from the N-terminus, the 413-residue chain is DNA polymerase IV 1 (413 aa).

The UmuC domain maps to 7-188; it reads IFHVDMNSFY…LPIEEMYGIG (182 aa). D11 and D107 together coordinate Mg(2+). The active site involves E108.

Belongs to the DNA polymerase type-Y family. Monomer. The cofactor is Mg(2+).

The protein resides in the cytoplasm. The enzyme catalyses DNA(n) + a 2'-deoxyribonucleoside 5'-triphosphate = DNA(n+1) + diphosphate. Functionally, poorly processive, error-prone DNA polymerase involved in untargeted mutagenesis. Copies undamaged DNA at stalled replication forks, which arise in vivo from mismatched or misaligned primer ends. These misaligned primers can be extended by PolIV. Exhibits no 3'-5' exonuclease (proofreading) activity. May be involved in translesional synthesis, in conjunction with the beta clamp from PolIII. This Halalkalibacterium halodurans (strain ATCC BAA-125 / DSM 18197 / FERM 7344 / JCM 9153 / C-125) (Bacillus halodurans) protein is DNA polymerase IV 1 (dinB1).